Consider the following 896-residue polypeptide: Alanine--tRNA ligase (896 aa).

Zn(2+)-binding residues include His574, His578, Cys677, and His681.

This sequence belongs to the class-II aminoacyl-tRNA synthetase family. Requires Zn(2+) as cofactor.

Its subcellular location is the cytoplasm. It catalyses the reaction tRNA(Ala) + L-alanine + ATP = L-alanyl-tRNA(Ala) + AMP + diphosphate. Its function is as follows. Catalyzes the attachment of alanine to tRNA(Ala) in a two-step reaction: alanine is first activated by ATP to form Ala-AMP and then transferred to the acceptor end of tRNA(Ala). Also edits incorrectly charged Ser-tRNA(Ala) and Gly-tRNA(Ala) via its editing domain. The polypeptide is Alanine--tRNA ligase (Mycoplasma capricolum subsp. capricolum (strain California kid / ATCC 27343 / NCTC 10154)).